Reading from the N-terminus, the 473-residue chain is MKLSMPRFDQAPVLVVGDVMLDRYWHGATSRISPEAPVPVVRVEQHEDRPGGAANVALNIAALGAQALLVGVTGRDEAADSLANSLKAAGVDARFQRIDSQPTIVKLRVMSRHQQLLRVDFEEPFRTDAAALAVDVESLLAKVKVLVLSDYGKGALQNHQVLIQAARARNIPVLADPKGKDFAIYRGASLITPNLSEFETIVGRCADEAELVAKGQALMSELDLGALLVTRGEHGMTLLRDGQPALHLPARAREVFDVTGAGDTVISTLAAALAAGEELPSAVGLANLAAGIVVGKLGTAAISAPELRRAVQREQGSERGVLGLEQLLLAIEDARAHGEKIVFTNGCFDILHAGHVTYLEQARAQGDRLIVGVNDDASVTRLKGVGRPINSVDRRMAVLAGLGAVDWVVSFAEDTPERLLEQVRPDVLVKGGDYGVEQVVGAQIVKAYGGEVRVLGLVENSSTTAIVEKIRQR.

A ribokinase region spans residues 1–317 (MKLSMPRFDQ…RRAVQREQGS (317 aa)). 194–197 (NLSE) contributes to the ATP binding site. Asp263 is an active-site residue. Residues 343–473 (FTNGCFDILH…TAIVEKIRQR (131 aa)) form a cytidylyltransferase region.

In the N-terminal section; belongs to the carbohydrate kinase PfkB family. It in the C-terminal section; belongs to the cytidylyltransferase family. In terms of assembly, homodimer.

The catalysed reaction is D-glycero-beta-D-manno-heptose 7-phosphate + ATP = D-glycero-beta-D-manno-heptose 1,7-bisphosphate + ADP + H(+). The enzyme catalyses D-glycero-beta-D-manno-heptose 1-phosphate + ATP + H(+) = ADP-D-glycero-beta-D-manno-heptose + diphosphate. The protein operates within nucleotide-sugar biosynthesis; ADP-L-glycero-beta-D-manno-heptose biosynthesis; ADP-L-glycero-beta-D-manno-heptose from D-glycero-beta-D-manno-heptose 7-phosphate: step 1/4. Its pathway is nucleotide-sugar biosynthesis; ADP-L-glycero-beta-D-manno-heptose biosynthesis; ADP-L-glycero-beta-D-manno-heptose from D-glycero-beta-D-manno-heptose 7-phosphate: step 3/4. Its function is as follows. Catalyzes the phosphorylation of D-glycero-D-manno-heptose 7-phosphate at the C-1 position to selectively form D-glycero-beta-D-manno-heptose-1,7-bisphosphate. Catalyzes the ADP transfer from ATP to D-glycero-beta-D-manno-heptose 1-phosphate, yielding ADP-D-glycero-beta-D-manno-heptose. The protein is Bifunctional protein HldE of Pseudomonas aeruginosa (strain LESB58).